The sequence spans 444 residues: Na(+)/H(+) antiporter NhaA (444 aa).

11 consecutive transmembrane segments (helical) span residues 27-47 (TTGL…NSPL), 72-92 (IHHW…GLEI), 108-128 (MLPI…YYAI), 136-156 (AGWG…LVLL), 167-187 (FLVA…ALFY), 190-210 (EINM…VSFN), 212-232 (FGIH…LFML), 312-332 (HLPV…GVSI), 349-369 (VMAG…YLAI), 385-405 (VFGV…IAEL), and 419-439 (IGIL…LRFI).

This sequence belongs to the NhaA Na(+)/H(+) (TC 2.A.33) antiporter family.

The protein localises to the cell inner membrane. The enzyme catalyses Na(+)(in) + 2 H(+)(out) = Na(+)(out) + 2 H(+)(in). Na(+)/H(+) antiporter that extrudes sodium in exchange for external protons. In Sulfurimonas denitrificans (strain ATCC 33889 / DSM 1251) (Thiomicrospira denitrificans (strain ATCC 33889 / DSM 1251)), this protein is Na(+)/H(+) antiporter NhaA.